We begin with the raw amino-acid sequence, 813 residues long: Enhancer of polycomb homolog 1 (813 aa).

Disordered stretches follow at residues 310–403 (FKHQ…PFAF), 484–513 (MLSSPQPSPVNQFANTSEPNTSDRSSSKDL), and 528–577 (FRPR…SSGS). The segment covering 311–333 (KHQDATDSKEFKVNKQDKADLIR) has biased composition (basic and acidic residues). Lys319 participates in a covalent cross-link: Glycyl lysine isopeptide (Lys-Gly) (interchain with G-Cter in SUMO2). The span at 346-361 (PPSAAAPQQQSPAALP) shows a compositional bias: low complexity. Residues 486–513 (SSPQPSPVNQFANTSEPNTSDRSSSKDL) are compositionally biased toward polar residues. Position 538 is a phosphoserine (Ser538). Residues 564 to 577 (TCSTSTQNRSSSGS) are compositionally biased toward low complexity. Lys650 participates in a covalent cross-link: Glycyl lysine isopeptide (Lys-Gly) (interchain with G-Cter in SUMO2). Residues 779–813 (VPSSSSVDSVPRENHESEKPALNNIADNTVAMEVT) are disordered. A compositionally biased stretch (basic and acidic residues) spans 788-797 (VPRENHESEK).

This sequence belongs to the enhancer of polycomb family. As to quaternary structure, component of the NuA4 histone acetyltransferase complex which contains the catalytic subunit KAT5/TIP60 and the subunits EP400, TRRAP/PAF400, BRD8/SMAP, EPC1, DMAP1/DNMAP1, RUVBL1/TIP49, RUVBL2, ING3, actin, ACTL6A/BAF53A, MORF4L1/MRG15, MORF4L2/MRGX, MRGBP, YEATS4/GAS41, VPS72/YL1 and MEAF6. KAT5/TIP60, EPC1, and ING3 together constitute a minimal HAT complex termed Piccolo NuA4. Component of a NuA4-related complex which contains EP400, TRRAP/PAF400, SRCAP, BRD8/SMAP, EPC1, DMAP1/DNMAP1, RUVBL1/TIP49, RUVBL2, actin, ACTL6A/BAF53A, VPS72 and YEATS4/GAS41. Interacts with TRIM27. Interacts with MBTD1; interaction is direct and promotes recruitment of MBTD1 into the NuA4 histone acetyltransferase complex. In terms of tissue distribution, expressed in adult brain, heart, kidney, liver, lung, skeletal muscle and testis. Expressed in male germ cells, present in round spermatids of steps 1 to 4.

Its subcellular location is the nucleus. It localises to the cytoplasm. Functionally, component of the NuA4 histone acetyltransferase (HAT) complex, a multiprotein complex involved in transcriptional activation of select genes principally by acetylation of nucleosomal histones H4 and H2A. The NuA4 complex plays a direct role in repair of DNA double-strand breaks (DSBs) by promoting homologous recombination (HR). The NuA4 complex is also required for spermatid development by promoting acetylation of histones: histone acetylation is required for histone replacement during the transition from round to elongating spermatids. In the NuA4 complex, EPC1 is required to recruit MBTD1 into the complex. This is Enhancer of polycomb homolog 1 from Mus musculus (Mouse).